Here is a 386-residue protein sequence, read N- to C-terminus: Diaminopimelate decarboxylase (386 aa).

K46 carries the N6-(pyridoxal phosphate)lysine modification. Pyridoxal 5'-phosphate contacts are provided by residues G214 and E246–R249. Substrate is bound by residues R249, R285, and Y289. C314 functions as the Proton donor in the catalytic mechanism. Substrate contacts are provided by E315 and Y343. A pyridoxal 5'-phosphate-binding site is contributed by Y343.

It belongs to the Orn/Lys/Arg decarboxylase class-II family. LysA subfamily. As to quaternary structure, homodimer. Requires pyridoxal 5'-phosphate as cofactor.

The enzyme catalyses meso-2,6-diaminopimelate + H(+) = L-lysine + CO2. The protein operates within amino-acid biosynthesis; L-lysine biosynthesis via DAP pathway; L-lysine from DL-2,6-diaminopimelate: step 1/1. Specifically catalyzes the decarboxylation of meso-diaminopimelate (meso-DAP) to L-lysine. This is Diaminopimelate decarboxylase from Thermotoga maritima (strain ATCC 43589 / DSM 3109 / JCM 10099 / NBRC 100826 / MSB8).